The following is a 507-amino-acid chain: ATP synthase subunit alpha (507 aa).

Residue Gly-170–Thr-177 coordinates ATP.

Belongs to the ATPase alpha/beta chains family. In terms of assembly, F-type ATPases have 2 components, CF(1) - the catalytic core - and CF(0) - the membrane proton channel. CF(1) has five subunits: alpha(3), beta(3), gamma(1), delta(1), epsilon(1). CF(0) has three main subunits: a(1), b(2) and c(9-12). The alpha and beta chains form an alternating ring which encloses part of the gamma chain. CF(1) is attached to CF(0) by a central stalk formed by the gamma and epsilon chains, while a peripheral stalk is formed by the delta and b chains.

Its subcellular location is the cell inner membrane. It carries out the reaction ATP + H2O + 4 H(+)(in) = ADP + phosphate + 5 H(+)(out). Produces ATP from ADP in the presence of a proton gradient across the membrane. The alpha chain is a regulatory subunit. This chain is ATP synthase subunit alpha, found in Thermosipho melanesiensis (strain DSM 12029 / CIP 104789 / BI429).